The chain runs to 213 residues: Motile sperm domain-containing protein 1 (213 aa).

In terms of domain architecture, MSP spans 16-143 (PVFVFPTELI…KEHLTESVFF (128 aa)). A run of 2 helical transmembrane segments spans residues 159-179 (SLLTVFLGVVCIAALMLPTLG) and 191-211 (LSVNQKLVAAYILGLITMAIL). Positions 205 to 208 (LITM) match the Nuclear export signal motif.

The protein resides in the endoplasmic reticulum membrane. The protein localises to the golgi apparatus membrane. Its function is as follows. Plays a role in differentiation and/or proliferation of mesenchymal stem cells. Proposed to be involved in epithelial-to-mesenchymal transition (EMT). However, another study suggests that it is not required for EMT or stem cell self-renewal and acts during later stages of differentiation. The sequence is that of Motile sperm domain-containing protein 1 (Mospd1) from Rattus norvegicus (Rat).